We begin with the raw amino-acid sequence, 595 residues long: uncharacterized protein (595 aa).

Positions 112–180 (VRPPGYDPES…KDVFGRALPT (69 aa)) are disordered. Basic and acidic residues-rich tracts occupy residues 120–133 (ESAK…EKHK) and 161–174 (RTQE…KDVF). The segment at 211–228 (VKCLRCGNFGHQSGDRDC) adopts a CCHC-type; degenerate zinc-finger fold. Disordered stretches follow at residues 254–290 (HTDP…IVAE) and 310–595 (KSMS…RRRN). A compositionally biased stretch (basic and acidic residues) spans 256–267 (DPSEPLKWELKQ). Basic residues-rich tracts occupy residues 316–331 (KKRK…KHSS) and 351–364 (RGSK…KKSK). 3 stretches are compositionally biased toward basic and acidic residues: residues 414-428 (HYYD…EIVD), 470-539 (VSEK…HVYE), and 547-565 (FSDR…ESNR). Basic residues predominate over residues 584 to 595 (RKHRYSTNRRRN).

This is an uncharacterized protein from Arabidopsis thaliana (Mouse-ear cress).